Here is a 675-residue protein sequence, read N- to C-terminus: Protein REPRESSOR OF VERNALIZATION 1 (675 aa).

The disordered stretch occupies residues 1-143; it reads MGRRRRFTQQ…DPVKVTGKGK (143 aa). The segment covering 22-31 has biased composition (low complexity); sequence AEPPKTAKPA. Residues 48–70 show a composition bias toward acidic residues; that stretch reads EEEDEDEEDELELEDEEDDEKDL. Basic and acidic residues predominate over residues 71–86; it reads EEMRRNEEEERREETR. A Nuclear localization signal motif is present at residues 73-80; it reads MRRNEEEE. Basic residues predominate over residues 87-96; sequence TRRRRGRKPK. Acidic residues predominate over residues 113–127; the sequence is SDEEEEEEVREEDST. In terms of domain architecture, BAH spans 157–275; that stretch reads NTFELEDPVL…TVAKKLWNLT (119 aa). Disordered stretches follow at residues 300–349, 493–512, and 587–675; these read ELPD…KPET, GLTP…LQMT, and LASP…ADHE. Basic and acidic residues-rich tracts occupy residues 333–346, 499–512, and 613–627; these read VSRD…HFVK, KTSE…LQMT, and KLEK…KPEE. The 147-residue stretch at 372–518 folds into the TFIIS central domain; that stretch reads YRDKWLDKLL…LQMTDARCER (147 aa).

Expressed constitutively.

The protein localises to the nucleus. Component of a grass-specific mechanism of vernalization, a process by which prolonged cold exposure provides competence to flower in daylengths longer than 12 hours. Negative regulator of flowering required for vernalization establishment by repressing VRN1 before vernalization and in the fall season. In Brachypodium distachyon (Purple false brome), this protein is Protein REPRESSOR OF VERNALIZATION 1.